The chain runs to 169 residues: Crossover junction endodeoxyribonuclease RuvC (169 aa).

Residues Asp11, Glu71, and Asp143 contribute to the active site. Residues Asp11, Glu71, and Asp143 each coordinate Mg(2+).

Belongs to the RuvC family. Homodimer which binds Holliday junction (HJ) DNA. The HJ becomes 2-fold symmetrical on binding to RuvC with unstacked arms; it has a different conformation from HJ DNA in complex with RuvA. In the full resolvosome a probable DNA-RuvA(4)-RuvB(12)-RuvC(2) complex forms which resolves the HJ. The cofactor is Mg(2+).

It localises to the cytoplasm. The enzyme catalyses Endonucleolytic cleavage at a junction such as a reciprocal single-stranded crossover between two homologous DNA duplexes (Holliday junction).. Functionally, the RuvA-RuvB-RuvC complex processes Holliday junction (HJ) DNA during genetic recombination and DNA repair. Endonuclease that resolves HJ intermediates. Cleaves cruciform DNA by making single-stranded nicks across the HJ at symmetrical positions within the homologous arms, yielding a 5'-phosphate and a 3'-hydroxyl group; requires a central core of homology in the junction. The consensus cleavage sequence is 5'-(A/T)TT(C/G)-3'. Cleavage occurs on the 3'-side of the TT dinucleotide at the point of strand exchange. HJ branch migration catalyzed by RuvA-RuvB allows RuvC to scan DNA until it finds its consensus sequence, where it cleaves and resolves the cruciform DNA. The polypeptide is Crossover junction endodeoxyribonuclease RuvC (Rhizobium johnstonii (strain DSM 114642 / LMG 32736 / 3841) (Rhizobium leguminosarum bv. viciae)).